Here is a 329-residue protein sequence, read N- to C-terminus: Ankyrin repeat and SOCS box protein 5 (329 aa).

ANK repeat units lie at residues 69-98 (ADRS…NVNA), 102-131 (DHIT…NVNA), 135-164 (DGVT…KAQL), 167-196 (CLPS…DVDQ), 200-229 (HLGT…DVQK), and 232-261 (YWDT…DINA). The region spanning 278–329 (MVERILLQHEATPSSLCQLCRLCIRNYIGRPRLHLIPQLQLPTLLQNFLQYR) is the SOCS box domain.

This sequence belongs to the ankyrin SOCS box (ASB) family. In terms of tissue distribution, expressed in endothelial and smooth muscle cells of collateral arteries as well as in satellite cells.

The protein operates within protein modification; protein ubiquitination. Its function is as follows. May be a substrate-recognition component of a SCF-like ECS (Elongin-Cullin-SOCS-box protein) E3 ubiquitin-protein ligase complex which mediates the ubiquitination and subsequent proteasomal degradation of target proteins. May play a role in the initiation of arteriogenesis. This is Ankyrin repeat and SOCS box protein 5 (ASB5) from Oryctolagus cuniculus (Rabbit).